The primary structure comprises 327 residues: MQRRHFIARAGIAAATAALGLAAMPAQAQADKFPQRPIRLVIGYTAGGSTDIPFRVLADNASKILGQPVIVENKPGAGGVLPAQMMQSTAPDGYTLAQVAMPVYRLPYTTKINWDPVKDLNYIINLAGYSFGLVVPADSPIKTMQEYIAYAKANPGKLTYGSPGSMTTLHLTMEELAMKQGVQFSHIPYKGNSESMQALLGGHVMSVADTPAWAPYVEQGKLRLLSTWGEKRSARFPSVPTLKELGIGIVQTSPFGLVAPKGTDPKIVQKLHDAFKKAMDMPNYRESLAKFDMEPYYMNSQQYAQFAAETVKKEKAIIEKLGLAKAQ.

Residues 1–30 (MQRRHFIARAGIAAATAALGLAAMPAQAQA) constitute a signal peptide (tat-type signal).

Belongs to the UPF0065 (bug) family. In terms of processing, predicted to be exported by the Tat system. The position of the signal peptide cleavage has not been experimentally proven.

The protein localises to the periplasm. The chain is UPF0065 protein in gbd 5'region from Cupriavidus necator (Alcaligenes eutrophus).